The sequence spans 748 residues: Phosphoenolpyruvate-dependent phosphotransferase system (748 aa).

The GAF domain occupies Met1–Val127. The tract at residues Gln128 to Arg170 is linker. The tract at residues Ile171–Leu748 is PTS EI. His356 functions as the Tele-phosphohistidine intermediate in the catalytic mechanism. Positions 462 and 498 each coordinate phosphoenolpyruvate. The Mg(2+) site is built by Glu597 and Asp621. Phosphoenolpyruvate contacts are provided by residues Asn620–Asp621 and Arg631. The Proton donor role is filled by Cys668.

This sequence belongs to the PEP-utilizing enzyme family. The cofactor is Mg(2+).

Its subcellular location is the cytoplasm. It carries out the reaction L-histidyl-[protein] + phosphoenolpyruvate = N(pros)-phospho-L-histidyl-[protein] + pyruvate. Its activity is regulated as follows. Inhibited by GDP and FAD. In terms of biological role, component of the phosphoenolpyruvate-dependent nitrogen-metabolic phosphotransferase system (nitrogen-metabolic PTS), that seems to be involved in regulating nitrogen metabolism. Enzyme I-Ntr transfers the phosphoryl group from phosphoenolpyruvate (PEP) to the phosphoryl carrier protein (NPr). Could function in the transcriptional regulation of sigma-54 dependent operons in conjunction with the NPr (PtsO) and EIIA-Ntr (PtsN) proteins. Enzyme I-Ntr is specific for NPr. This is Phosphoenolpyruvate-dependent phosphotransferase system (ptsP) from Escherichia coli (strain K12).